Consider the following 479-residue polypeptide: BRAP2 RING ZnF UBP domain-containing protein 2 (479 aa).

An RING-type; atypical zinc finger spans residues 167-207; that stretch reads CPVCLERLDQDTGGILTTMCNHSFHCSCISNWPDSSCPVCR. The UBP-type; degenerate zinc finger occupies 201-294; it reads SSCPVCRYCQ…GKLVELNSHG (94 aa). The Zn(2+) site is built by Cys-218, Cys-221, Cys-230, Cys-233, Cys-238, His-245, His-249, and His-255. Residues 328 to 442 are a coiled coil; the sequence is NELLQAQLEN…MAQMDGESEV (115 aa). The segment at 434 to 479 is disordered; sequence AQMDGESEVSETKEVQDATVSTTNTSSSGAGNVIHANKKKSNRRKG. Residues 451–466 show a composition bias toward low complexity; that stretch reads ATVSTTNTSSSGAGNV. The segment covering 469–479 has biased composition (basic residues); sequence ANKKKSNRRKG.

In terms of assembly, component of the heteromeric E3 ligase complex made of BRIZ1 and BRIZ2. Forms heterooligomers with BRIZ1 via coiled-coil domains.

It carries out the reaction S-ubiquitinyl-[E2 ubiquitin-conjugating enzyme]-L-cysteine + [acceptor protein]-L-lysine = [E2 ubiquitin-conjugating enzyme]-L-cysteine + N(6)-ubiquitinyl-[acceptor protein]-L-lysine.. It participates in protein modification; protein ubiquitination. Its function is as follows. RING-type ubiquitin E3 ligase that binds ubiquitin and is required for seed germination and post-germination growth. The protein is BRAP2 RING ZnF UBP domain-containing protein 2 of Arabidopsis thaliana (Mouse-ear cress).